Here is a 376-residue protein sequence, read N- to C-terminus: Transforming growth factor beta-1 proprotein (376 aa).

Positions 1-22 are cleaved as a signal peptide; that stretch reads MRVESLLLALQCLLGFVHYSGA. Residues 23–68 are straightjacket domain; sequence LSTCSPLDLELIKRKRIEAIRGQILSKLRLSKEPEVDEEKESQNIP. Positions 69-258 are arm domain; the sequence is AELISVYNST…SLPLDGNNSS (190 aa). N-linked (GlcNAc...) asparagine glycosylation is found at N76, N125, and N167. A bowtie tail region spans residues 214–238; it reads DPQKTFQLKIPGLVLVRGDTETLAV. The short motif at 230–232 is the Cell attachment site element; it reads RGD. 3 disulfide bridges follow: C272/C280, C308/C373, and C312/C375.

This sequence belongs to the TGF-beta family. As to quaternary structure, latency-associated peptide: Homodimer; disulfide-linked. Latency-associated peptide: Interacts with Transforming growth factor beta-1 (TGF-beta-1) chain; interaction is non-covalent and maintains (TGF-beta-1) in a latent state; each Latency-associated peptide (LAP) monomer interacts with TGF-beta-1 in the other monomer. Transforming growth factor beta-1: Homodimer; disulfide-linked. Transforming growth factor beta-1: Interacts with TGF-beta receptors (tgfbr1 and tgfbr2), leading to signal transduction. Interacts with EFEMP2. Post-translationally, transforming growth factor beta-1 proprotein: The precursor proprotein is cleaved in the Golgi apparatus to form Transforming growth factor beta-1 (TGF-beta-1) and Latency-associated peptide (LAP) chains, which remain non-covalently linked, rendering TGF-beta-1 inactive.

Its subcellular location is the secreted. It is found in the extracellular space. The protein localises to the extracellular matrix. In terms of biological role, transforming growth factor beta-1 proprotein: Precursor of the Latency-associated peptide (LAP) and Transforming growth factor beta-1 (TGF-beta-1) chains, which constitute the regulatory and active subunit of TGF-beta-1, respectively. Its function is as follows. Required to maintain the Transforming growth factor beta-1 (TGF-beta-1) chain in a latent state during storage in extracellular matrix. Associates non-covalently with TGF-beta-1 and regulates its activation via interaction with 'milieu molecules', such as LTBP1, LRRC32/GARP and LRRC33/NRROS, that control activation of TGF-beta-1. Interaction with integrins (ITGAV:ITGB6 or ITGAV:ITGB8) results in distortion of the Latency-associated peptide chain and subsequent release of the active TGF-beta-1. Functionally, transforming growth factor beta-1: Multifunctional protein that regulates the growth and differentiation of various cell types and is involved in various processes, such as normal development, immune function, microglia function and responses to neurodegeneration. Activation into mature form follows different steps: following cleavage of the proprotein in the Golgi apparatus, Latency-associated peptide (LAP) and Transforming growth factor beta-1 (TGF-beta-1) chains remain non-covalently linked rendering TGF-beta-1 inactive during storage in extracellular matrix. At the same time, LAP chain interacts with 'milieu molecules', such as ltbp1, lrrc32/garp and lrrc33/nrros that control activation of TGF-beta-1 and maintain it in a latent state during storage in extracellular milieus. TGF-beta-1 is released from LAP by integrins (ITGAV:ITGB6 or ITGAV:ITGB8): integrin-binding to LAP stabilizes an alternative conformation of the LAP bowtie tail and results in distortion of the LAP chain and subsequent release of the active TGF-beta-1. Once activated following release of LAP, TGF-beta-1 acts by binding to TGF-beta receptors (tgfbr1 and tgfbr2), which transduce signal. While expressed by many cells types, TGF-beta-1 only has a very localized range of action within cell environment thanks to fine regulation of its activation by Latency-associated peptide chain (LAP) and 'milieu molecules'. Plays an important role in bone remodeling: acts as a potent stimulator of osteoblastic bone formation. Can promote either T-helper 17 cells (Th17) or regulatory T-cells (Treg) lineage differentiation in a concentration-dependent manner. Can induce epithelial-to-mesenchymal transition (EMT) and cell migration in various cell types. In Cyprinus carpio (Common carp), this protein is Transforming growth factor beta-1 proprotein (tgfb1).